The following is a 219-amino-acid chain: Elongation factor Ts (219 aa).

The involved in Mg(2+) ion dislocation from EF-Tu stretch occupies residues 82-85 (TDFV).

Belongs to the EF-Ts family.

It localises to the cytoplasm. In terms of biological role, associates with the EF-Tu.GDP complex and induces the exchange of GDP to GTP. It remains bound to the aminoacyl-tRNA.EF-Tu.GTP complex up to the GTP hydrolysis stage on the ribosome. The chain is Elongation factor Ts from Trichodesmium erythraeum (strain IMS101).